A 182-amino-acid chain; its full sequence is ATP-dependent protease subunit HslV (182 aa).

Residue T10 is part of the active site. A166, C169, and S172 together coordinate Na(+).

The protein belongs to the peptidase T1B family. HslV subfamily. In terms of assembly, a double ring-shaped homohexamer of HslV is capped on each side by a ring-shaped HslU homohexamer. The assembly of the HslU/HslV complex is dependent on binding of ATP.

It localises to the cytoplasm. The catalysed reaction is ATP-dependent cleavage of peptide bonds with broad specificity.. With respect to regulation, allosterically activated by HslU binding. Protease subunit of a proteasome-like degradation complex believed to be a general protein degrading machinery. This is ATP-dependent protease subunit HslV from Rickettsia prowazekii (strain Madrid E).